The sequence spans 714 residues: RanBP-type and C3HC4-type zinc finger-containing protein 1 (714 aa).

Disordered stretches follow at residues 1-23 (MSLSSGGWTRASPPAQSSSSHLG) and 152-172 (SSSTEEGRLPPPPLATQSKAP). Polar residues predominate over residues 14–23 (PAQSSSSHLG). Positions 225–301 (LAVVVEDASS…TAFLYLISAR (77 aa)) constitute a Ubiquitin-like domain. The RanBP2-type zinc-finger motif lies at 394–426 (RTSIQPGWACPTCTYINKPTRPGCEMCSADRPE). A TRIAD supradomain region spans residues 482-710 (ERVECRICYV…VNKQRCHPKC (229 aa)). Zn(2+) contacts are provided by cysteine 486, cysteine 489, cysteine 504, histidine 506, cysteine 509, cysteine 512, cysteine 527, cysteine 536, cysteine 575, cysteine 580, cysteine 595, cysteine 598, cysteine 603, cysteine 606, histidine 610, cysteine 615, cysteine 651, and cysteine 654. An RING-type 1 zinc finger spans residues 486–536 (CRICYVELESGEGVLLRECLHCFCKECLRSVILMSEDPQVACPYRDESYAC). The IBR-type zinc-finger motif lies at 555 to 615 (QHWLQRGLSV…CKAIHEGMNC (61 aa)). An RING-type 2; atypical zinc finger spans residues 651-680 (CPQCGIIVQKKEGCDWLRCTVCHTEICWVT). The active site involves cysteine 664. Zn(2+)-binding residues include cysteine 669 and cysteine 672.

It belongs to the RBR family. In terms of assembly, component of the LUBAC complex (linear ubiquitin chain assembly complex).

It catalyses the reaction [E2 ubiquitin-conjugating enzyme]-S-ubiquitinyl-L-cysteine + [acceptor protein]-L-lysine = [E2 ubiquitin-conjugating enzyme]-L-cysteine + [acceptor protein]-N(6)-ubiquitinyl-L-lysine.. It functions in the pathway protein modification; protein ubiquitination. Functionally, component of the LUBAC complex which conjugates linear ('Met-1'-linked) polyubiquitin chains to substrates and plays a key role in NF-kappa-B activation and regulation of inflammation. LUBAC conjugates linear polyubiquitin to ikbkg and RIPK1 and is involved in activation of the canonical NF-kappa-B and the JNK signaling pathways. Linear ubiquitination mediated by the LUBAC complex interferes with TNF-induced cell death and thereby prevents inflammation. LUBAC is recruited to the TNF-R1 signaling complex (TNF-RSC) to conjugate linear polyubiquitin to ikbkg and possibly other components contributing to the stability of the complex. The LUBAC complex is also involved in innate immunity by conjugating linear polyubiquitin chains at the surface of bacteria invading the cytosol to form the ubiquitin coat surrounding bacteria. LUBAC is not able to initiate formation of the bacterial ubiquitin coat, and can only promote formation of linear polyubiquitins on pre-existing ubiquitin. The bacterial ubiquitin coat acts as an 'eat-me' signal for xenophagy and promotes NF-kappa-B activation. Binds polyubiquitin of different linkage types. This is RanBP-type and C3HC4-type zinc finger-containing protein 1 (rbck1) from Danio rerio (Zebrafish).